A 108-amino-acid chain; its full sequence is UPF0145 protein Acel_2109 (108 aa).

This sequence belongs to the UPF0145 family.

This Acidothermus cellulolyticus (strain ATCC 43068 / DSM 8971 / 11B) protein is UPF0145 protein Acel_2109.